Reading from the N-terminus, the 236-residue chain is Purine nucleoside phosphorylase DeoD-type (236 aa).

H5 serves as a coordination point for a purine D-ribonucleoside. Phosphate-binding positions include G21, R25, R44, and 88–91 (RVGT). Residues 180–182 (EME) and 204–205 (SD) each bind a purine D-ribonucleoside. Catalysis depends on D205, which acts as the Proton donor.

It belongs to the PNP/UDP phosphorylase family. As to quaternary structure, homohexamer; trimer of homodimers.

It carries out the reaction a purine D-ribonucleoside + phosphate = a purine nucleobase + alpha-D-ribose 1-phosphate. The catalysed reaction is a purine 2'-deoxy-D-ribonucleoside + phosphate = a purine nucleobase + 2-deoxy-alpha-D-ribose 1-phosphate. In terms of biological role, catalyzes the reversible phosphorolytic breakdown of the N-glycosidic bond in the beta-(deoxy)ribonucleoside molecules, with the formation of the corresponding free purine bases and pentose-1-phosphate. The sequence is that of Purine nucleoside phosphorylase DeoD-type from Shewanella baltica (strain OS155 / ATCC BAA-1091).